The primary structure comprises 1052 residues: Kruppel-like factor 18 (1052 aa).

C2H2-type zinc fingers lie at residues 964–988, 994–1018, and 1024–1046; these read YVCTYEDCKMSYSKACHLRTHMRKH, YVCDVEGCTWKFARSDELNRHKKRH, and YLCSICSKNFARSDHLKQHAKVH.

It belongs to the krueppel C2H2-type zinc-finger protein family.

It localises to the nucleus. The chain is Kruppel-like factor 18 from Homo sapiens (Human).